A 227-amino-acid chain; its full sequence is Phosphoribosylformylglycinamidine synthase subunit PurQ (227 aa).

The Glutamine amidotransferase type-1 domain occupies 3–227 (FAVCVFPGSN…LMLWYSLLSD (225 aa)). Residue cysteine 86 is the Nucleophile of the active site. Catalysis depends on residues histidine 203 and glutamate 205.

As to quaternary structure, part of the FGAM synthase complex composed of 1 PurL, 1 PurQ and 2 PurS subunits.

It is found in the cytoplasm. The enzyme catalyses N(2)-formyl-N(1)-(5-phospho-beta-D-ribosyl)glycinamide + L-glutamine + ATP + H2O = 2-formamido-N(1)-(5-O-phospho-beta-D-ribosyl)acetamidine + L-glutamate + ADP + phosphate + H(+). It carries out the reaction L-glutamine + H2O = L-glutamate + NH4(+). It participates in purine metabolism; IMP biosynthesis via de novo pathway; 5-amino-1-(5-phospho-D-ribosyl)imidazole from N(2)-formyl-N(1)-(5-phospho-D-ribosyl)glycinamide: step 1/2. In terms of biological role, part of the phosphoribosylformylglycinamidine synthase complex involved in the purines biosynthetic pathway. Catalyzes the ATP-dependent conversion of formylglycinamide ribonucleotide (FGAR) and glutamine to yield formylglycinamidine ribonucleotide (FGAM) and glutamate. The FGAM synthase complex is composed of three subunits. PurQ produces an ammonia molecule by converting glutamine to glutamate. PurL transfers the ammonia molecule to FGAR to form FGAM in an ATP-dependent manner. PurS interacts with PurQ and PurL and is thought to assist in the transfer of the ammonia molecule from PurQ to PurL. This chain is Phosphoribosylformylglycinamidine synthase subunit PurQ, found in Aquifex aeolicus (strain VF5).